We begin with the raw amino-acid sequence, 779 residues long: Serine/threonine-protein kinase SIK1 (779 aa).

Residues 27 to 278 (YDVERTLGKG…IAQIRQHRWM (252 aa)) enclose the Protein kinase domain. Residues 33-41 (LGKGNFAVV) and lysine 56 each bind ATP. Aspartate 149 acts as the Proton acceptor in catalysis. Threonine 182 bears the Phosphothreonine; by LKB1 and GSK3-beta mark. Serine 186 bears the Phosphoserine; by autocatalysis mark. The region spanning 303-343 (DYNEQVLGIMQALGIDRQRTIESLQNSSYNHFAAIYYLLLE) is the UBA domain. Residue threonine 322 is modified to Phosphothreonine; by CaMK1. Disordered stretches follow at residues 350-375 (SAQPSSRPTPAPTRQPQLRSSDLSSL) and 449-472 (EARQGPSLEEEQEVQEPLPGSTGR). Over residues 363-373 (RQPQLRSSDLS) the composition is skewed to polar residues. Position 577 is a phosphoserine; by PKA (serine 577). An RK-rich region region spans residues 586 to 612 (KAFRQQLRKNARTKGFLGLNKIKGLAR). Residues 621–641 (TPRGGMSTFHTPAPSSGLQGC) form a disordered region. Positions 628-641 (TFHTPAPSSGLQGC) are enriched in polar residues.

It belongs to the protein kinase superfamily. CAMK Ser/Thr protein kinase family. AMPK subfamily. In terms of assembly, interacts (when phosphorylated on Thr-182 and Ser-186) with YWHAZ. Interacts with ATP1A1. It depends on Mg(2+) as a cofactor. In terms of processing, phosphorylated at Thr-182 by STK11/LKB1 in complex with STE20-related adapter-alpha (STRADA) pseudo kinase and CAB39, leading to its activation. Phosphorylation at Thr-182 promotes autophosphorylation at Ser-186, which is required for sustained activity. Autophosphorylation at Ser-186 is maintained by sequential phosphorylation at Thr-182 by GSK3-beta. GSK3-beta cannot initiate phosphorylation at Thr-182, it can only maintain it. Phosphorylation at Ser-577 by PKA promotes translocation to the cytoplasm. Phosphorylation at Thr-322 by CaMK1 following intracellular sodium concentration leads to activation. In terms of tissue distribution, expressed in lung, skin, ovary, heart and stomach. No expression in brain, liver or adult skeletal muscle but is present in skeletal muscle progenitor cells of the somite beginning at 9.5 dpc. Present at 8.0 dpc in the monolayer of presumptive myocardial cells but rapidly down-regulated at 8.5 dpc upon primitive ventricle formation, although still present in myocardial cells that will populate the primitive atrium and bulbus cordis. At 9.5 dpc expression is down-regulated in the primitive atrium but observed in the sinus venosus and truncus arteriosus.

Its subcellular location is the cytoplasm. It localises to the nucleus. It catalyses the reaction L-seryl-[protein] + ATP = O-phospho-L-seryl-[protein] + ADP + H(+). It carries out the reaction L-threonyl-[protein] + ATP = O-phospho-L-threonyl-[protein] + ADP + H(+). With respect to regulation, activated by phosphorylation on Thr-182. Also activated by phosphorylation on Thr-322 in response to increases in intracellular sodium in parallel with elevations in intracellular calcium through the reversible sodium/calcium exchanger. In terms of biological role, serine/threonine-protein kinase involved in various processes such as cell cycle regulation, gluconeogenesis and lipogenesis regulation, muscle growth and differentiation and tumor suppression. Phosphorylates HDAC4, HDAC5, PPME1, SREBF1, CRTC1/TORC1 and CRTC2/TORC2. Acts as a tumor suppressor and plays a key role in p53/TP53-dependent anoikis, a type of apoptosis triggered by cell detachment: required for phosphorylation of p53/TP53 in response to loss of adhesion and is able to suppress metastasis. Part of a sodium-sensing signaling network, probably by mediating phosphorylation of PPME1: following increases in intracellular sodium, SIK1 is activated by CaMK1 and phosphorylates PPME1 subunit of protein phosphatase 2A (PP2A), leading to dephosphorylation of sodium/potassium-transporting ATPase ATP1A1 and subsequent increase activity of ATP1A1. Acts as a regulator of muscle cells by phosphorylating and inhibiting class II histone deacetylases HDAC4 and HDAC5, leading to promote expression of MEF2 target genes in myocytes. Also required during cardiomyogenesis by regulating the exit of cardiomyoblasts from the cell cycle via down-regulation of CDKN1C/p57Kip2. Acts as a regulator of hepatic gluconeogenesis by phosphorylating and repressing the CREB-specific coactivators CRTC1/TORC1 and CRTC2/TORC2, leading to inhibit CREB activity. Also regulates hepatic lipogenesis by phosphorylating and inhibiting SREBF1. In concert with CRTC1/TORC1, regulates the light-induced entrainment of the circadian clock by attenuating PER1 induction; represses CREB-mediated transcription of PER1 by phosphorylating and deactivating CRTC1/TORC1. The sequence is that of Serine/threonine-protein kinase SIK1 (Sik1) from Mus musculus (Mouse).